The following is a 185-amino-acid chain: Ribosome-recycling factor (185 aa).

A disordered region spans residues 127-158 (AVRNTRQDANNKVKKLEKDKEISEDESKKAQE).

This sequence belongs to the RRF family.

The protein resides in the cytoplasm. Its function is as follows. Responsible for the release of ribosomes from messenger RNA at the termination of protein biosynthesis. May increase the efficiency of translation by recycling ribosomes from one round of translation to another. The protein is Ribosome-recycling factor of Helicobacter pylori (strain G27).